The primary structure comprises 426 residues: Pannexin-1 (426 aa).

The Cytoplasmic segment spans residues 1-40; it reads MAIAQLATEYVFSDFLLKEPTEPKFKGLRLELAVDKMVTC. Position 40 is an S-nitrosocysteine (Cys40). The helical transmembrane segment at 41 to 61 threads the bilayer; the sequence is IAVGLPLLLISLAFAQEISIG. Residues 62-106 are Extracellular-facing; sequence TQISCFSPSSFSWRQAAFVDSYCWAAVQQKNSLQSESGNLPLWLH. 2 cysteine pairs are disulfide-bonded: Cys66–Cys265 and Cys84–Cys246. A helical membrane pass occupies residues 107–127; that stretch reads KFFPYILLLFAILLYLPPLFW. Residues 128-217 are Cytoplasmic-facing; sequence RFAAAPHICS…NLIIKYISCR (90 aa). A Phosphotyrosine modification is found at Tyr199. The chain crosses the membrane as a helical span at residues 218-238; that stretch reads LLTLIIILLACIYLGYYFSLS. Topologically, residues 239-266 are extracellular; that stretch reads SLSDEFVCSIKSGILRNDSTVPDQFQCK. Asn255 carries N-linked (GlcNAc...) asparagine glycosylation. Residues 267–287 form a helical membrane-spanning segment; it reads LIAVGIFQLLSVINLVVYVLL. Residues 288–426 lie on the Cytoplasmic side of the membrane; sequence APVVVYTLFV…ARQRLLDSSC (139 aa). Cys347 carries the S-nitrosocysteine modification. Residues 405–414 show a composition bias toward polar residues; it reads DSETKANNGE. The interval 405-426 is disordered; the sequence is DSETKANNGEKNARQRLLDSSC. Over residues 415–426 the composition is skewed to basic and acidic residues; sequence KNARQRLLDSSC.

It belongs to the pannexin family. Homoheptameric. S-nitrosylation inhibits channel currents and ATP release. In terms of processing, N-glycosylation plays a role in cell surface targeting. Glycosylation at its extracellular surface makes unlikely that two oligomers could dock to form an intercellular channel such as in gap junctions. Exists in three glycosylation states: non-glycosylated (GLY0), high-mannose glycosylated (GLY1), and fully mature glycosylated (GLY2). Post-translationally, cleaved by CASP3 and CASP7 during apoptosis. Cleavage opens the channel for the release of metabolites and induces plasma membrane permeability during apoptosis. Phosphorylated at Tyr-199 by SRC. Phosphorylation activates ATP release. Constitutively phosphorylated in vascular smooth muscle cells. As to expression, widely expressed. Highest expression is observed in oocytes and brain. Detected at very low levels in sperm cells.

Its subcellular location is the cell membrane. It localises to the endoplasmic reticulum membrane. It carries out the reaction chloride(in) = chloride(out). It catalyses the reaction iodide(out) = iodide(in). The catalysed reaction is ATP(in) = ATP(out). The enzyme catalyses K(+)(in) = K(+)(out). It carries out the reaction Ca(2+)(in) = Ca(2+)(out). It catalyses the reaction Na(+)(in) = Na(+)(out). The catalysed reaction is nitrate(in) = nitrate(out). The enzyme catalyses L-aspartate(out) = L-aspartate(in). It carries out the reaction L-glutamate(out) = L-glutamate(in). It catalyses the reaction D-gluconate(in) = D-gluconate(out). The catalysed reaction is spermidine(in) = spermidine(out). Its function is as follows. Ion channel involved in a variety of physiological functions such as blood pressure regulation, apoptotic cell clearance and oogenesis. Forms anion-selective channels with relatively low conductance and an order of permeabilities: nitrate&gt;iodide&gt;chlroride&gt;&gt;aspartate=glutamate=gluconate. Can release ATP upon activation through phosphorylation or cleavage at C-terminus. May play a role as a Ca(2+)-leak channel to regulate ER Ca(2+) homeostasis. Functionally, during apoptosis, the C terminal tail is cleaved by caspases, which opens the main pore acting as a large-pore ATP efflux channel with a broad distribution, which allows the regulated release of molecules and ions smaller than 1 kDa, such as nucleotides ATP and UTP, and selective plasma membrane permeability to attract phagocytes that engulf the dying cells. This is Pannexin-1 from Homo sapiens (Human).